The chain runs to 188 residues: Elongation factor P-like protein (188 aa).

It belongs to the elongation factor P family.

This is Elongation factor P-like protein from Marinobacter nauticus (strain ATCC 700491 / DSM 11845 / VT8) (Marinobacter aquaeolei).